A 138-amino-acid chain; its full sequence is Large ribosomal subunit protein uL16 (138 aa).

The span at 1–16 shows a compositional bias: basic residues; it reads MLIPKRVKYRRQHRPT. Residues 1–23 form a disordered region; it reads MLIPKRVKYRRQHRPTRSGISKG.

The protein belongs to the universal ribosomal protein uL16 family. Part of the 50S ribosomal subunit.

Binds 23S rRNA and is also seen to make contacts with the A and possibly P site tRNAs. The polypeptide is Large ribosomal subunit protein uL16 (Corynebacterium glutamicum (strain R)).